Consider the following 159-residue polypeptide: Phosphoribosylaminoimidazole carboxylase (159 aa).

Positions 11, 14, 38, 41, 67, and 69 each coordinate substrate.

It carries out the reaction 5-amino-1-(5-phospho-D-ribosyl)imidazole-4-carboxylate + H(+) = 5-amino-1-(5-phospho-beta-D-ribosyl)imidazole + CO2. The protein operates within purine metabolism; IMP biosynthesis via de novo pathway; 5-amino-1-(5-phospho-D-ribosyl)imidazole-4-carboxylate from 5-amino-1-(5-phospho-D-ribosyl)imidazole (carboxylase route): step 1/1. Catalyzes the reversible conversion of 5-aminoimidazole ribonucleotide (AIR) and CO(2) to 4-carboxy-5-aminoimidazole ribonucleotide (CAIR). Does not accept N5-carboxyaminoimidazole ribonucleotide (N5-CAIR) as a substrate. The sequence is that of Phosphoribosylaminoimidazole carboxylase from Treponema denticola (strain ATCC 35405 / DSM 14222 / CIP 103919 / JCM 8153 / KCTC 15104).